The primary structure comprises 419 residues: G protein-activated inward rectifier potassium channel 4 (419 aa).

Over 1–86 the chain is Cytoplasmic; the sequence is MAGDSRNAMN…LFTTLVDLKW (86 aa). S5 carries the phosphoserine modification. Residues 87–111 form a helical membrane-spanning segment; it reads RFNLLVFTMVYTVTWLFFGFIWWLI. Topologically, residues 112-135 are extracellular; that stretch reads AYIRGDLDHVGDQEWIPCVENLSG. Residues 136–147 constitute an intramembrane region (helical; Pore-forming); it reads FVSAFLFSIETE. An intramembrane region (pore-forming) is located at residues 148–154; sequence TTIGYGF. Residues 149-154 carry the Selectivity filter motif; the sequence is TIGYGF. Topologically, residues 155-163 are extracellular; sequence RVITEKCPE. Residues 164 to 185 traverse the membrane as a helical segment; it reads GIILLLVQAILGSIVNAFMVGC. The Cytoplasmic portion of the chain corresponds to 186–419; sequence MFVKISQPKK…GGSREARGSV (234 aa). A disordered region spans residues 390–419; the sequence is AEAGLDAEAEQNEEDEPKGLGGSREARGSV. The span at 394–405 shows a compositional bias: acidic residues; that stretch reads LDAEAEQNEEDE.

This sequence belongs to the inward rectifier-type potassium channel (TC 1.A.2.1) family. KCNJ5 subfamily. Associates with KCNJ3/GIRK1 to form a G-protein-activated heteromultimer pore-forming unit. The resulting inward current is much larger. Associates with KCNJ6/GIRK2 to form a G-protein-activated heteromultimer pore-forming unit. In terms of tissue distribution, islets, exocrine pancreas and heart. Expressed in the adrenal cortex, particularly the zona glomerulosa.

It localises to the membrane. The enzyme catalyses K(+)(in) = K(+)(out). Its activity is regulated as follows. Heteromultimer composed of KCNJ3/GIRK1 and KCNJ5/GIRK4 is activated by phosphatidylinositol 4,5 biphosphate (PtdIns(4,5)P2). Functionally, inward rectifier potassium channels are characterized by a greater tendency to allow potassium to flow into the cell rather than out of it. Their voltage dependence is regulated by the concentration of extracellular potassium; as external potassium is raised, the voltage range of the channel opening shifts to more positive voltages. The inward rectification is mainly due to the blockage of outward current by internal magnesium. Can be blocked by external barium. This potassium channel is controlled by G proteins. The polypeptide is G protein-activated inward rectifier potassium channel 4 (KCNJ5) (Homo sapiens (Human)).